Here is a 93-residue protein sequence, read N- to C-terminus: YcgL domain-containing protein VSAL_I1068 (93 aa).

Residues 1–84 enclose the YcgL domain; it reads MYCSIYKSSK…PPENLLEKYK (84 aa).

The chain is YcgL domain-containing protein VSAL_I1068 from Aliivibrio salmonicida (strain LFI1238) (Vibrio salmonicida (strain LFI1238)).